The sequence spans 493 residues: Glutamate--tRNA ligase (493 aa).

Residues 10–20 (PSPTGTPHVGL) carry the 'HIGH' region motif. A 'KMSKS' region motif is present at residues 254 to 258 (KLSKR). Lys-257 is an ATP binding site.

This sequence belongs to the class-I aminoacyl-tRNA synthetase family. Glutamate--tRNA ligase type 1 subfamily. Monomer.

The protein localises to the cytoplasm. The enzyme catalyses tRNA(Glu) + L-glutamate + ATP = L-glutamyl-tRNA(Glu) + AMP + diphosphate. Catalyzes the attachment of glutamate to tRNA(Glu) in a two-step reaction: glutamate is first activated by ATP to form Glu-AMP and then transferred to the acceptor end of tRNA(Glu). The protein is Glutamate--tRNA ligase of Corynebacterium glutamicum (strain ATCC 13032 / DSM 20300 / JCM 1318 / BCRC 11384 / CCUG 27702 / LMG 3730 / NBRC 12168 / NCIMB 10025 / NRRL B-2784 / 534).